The following is a 365-amino-acid chain: Guanine nucleotide-binding protein alpha-6 subunit (365 aa).

Gly-2 carries the N-myristoyl glycine lipid modification. In terms of domain architecture, G-alpha spans 42–364; the sequence is NRFKILLLGT…NENLRSAGLH (323 aa). The tract at residues 45 to 58 is G1 motif; sequence KILLLGTAESGKST. GTP contacts are provided by residues 50 to 57, 187 to 193, 212 to 216, 281 to 284, and Ala-336; these read GTAESGKS, VHCRIST, DVGGQ, and NKYD. Positions 57 and 193 each coordinate Mg(2+). Residues 185-193 form a G2 motif region; it reads DIVHCRIST. Residues 208-217 are G3 motif; it reads FKMVDVGGQR. Residues 277–284 are G4 motif; it reads VLFLNKYD. Residues 334-339 are G5 motif; it reads TTATDT.

The protein belongs to the G-alpha family. As to quaternary structure, g proteins are composed of 3 units; alpha, beta and gamma. The alpha chain contains the guanine nucleotide binding site.

Its function is as follows. Guanine nucleotide-binding proteins (G proteins) are involved as modulators or transducers in various transmembrane signaling systems. The sequence is that of Guanine nucleotide-binding protein alpha-6 subunit (gpa-6) from Caenorhabditis briggsae.